The sequence spans 177 residues: ATP-dependent protease subunit HslV (177 aa).

Threonine 7 is an active-site residue. Residues alanine 162, cysteine 165, and threonine 168 each coordinate Na(+).

It belongs to the peptidase T1B family. HslV subfamily. As to quaternary structure, a double ring-shaped homohexamer of HslV is capped on each side by a ring-shaped HslU homohexamer. The assembly of the HslU/HslV complex is dependent on binding of ATP.

It is found in the cytoplasm. It catalyses the reaction ATP-dependent cleavage of peptide bonds with broad specificity.. Its activity is regulated as follows. Allosterically activated by HslU binding. Protease subunit of a proteasome-like degradation complex believed to be a general protein degrading machinery. The protein is ATP-dependent protease subunit HslV of Leptospira biflexa serovar Patoc (strain Patoc 1 / Ames).